The primary structure comprises 94 residues: C-C motif chemokine 26 (94 aa).

A signal peptide spans 1 to 23; sequence MMGLSLASAVLLASLLSLHLGTA. 2 disulfides stabilise this stretch: cysteine 33/cysteine 57 and cysteine 34/cysteine 73.

It belongs to the intercrine beta (chemokine CC) family. As to quaternary structure, monomer. As to expression, ubiquitously expressed at low levels in various tissues including heart and ovary.

The protein localises to the secreted. Its function is as follows. Chemoattractant for eosinophils and basophils. Acts as a ligand for C-C chemokine receptor CCR3 which triggers Ca(2+) mobilization in eosinophils. Also acts as a ligand for CX3C chemokine receptor CX3CR1, inducing cell chemotaxis. The protein is C-C motif chemokine 26 of Homo sapiens (Human).